A 365-amino-acid polypeptide reads, in one-letter code: Flagellar P-ring protein (365 aa).

The N-terminal stretch at 1-19 (MMLSLCAIAGLLLAPSIQA) is a signal peptide.

It belongs to the FlgI family. The basal body constitutes a major portion of the flagellar organelle and consists of four rings (L,P,S, and M) mounted on a central rod.

The protein localises to the periplasm. It localises to the bacterial flagellum basal body. Functionally, assembles around the rod to form the L-ring and probably protects the motor/basal body from shearing forces during rotation. This chain is Flagellar P-ring protein, found in Sodalis glossinidius (strain morsitans).